Reading from the N-terminus, the 148-residue chain is Lipoprotein signal peptidase (148 aa).

Helical transmembrane passes span 57-77 and 80-100; these read QWIF…YLNT and VHIF…GNLI. Active-site residues include D110 and D126. The helical transmembrane segment at 124 to 144 threads the bilayer; it reads IADVFVVVGTVFLCIYVLFFE.

This sequence belongs to the peptidase A8 family.

The protein localises to the cell membrane. It catalyses the reaction Release of signal peptides from bacterial membrane prolipoproteins. Hydrolyzes -Xaa-Yaa-Zaa-|-(S,diacylglyceryl)Cys-, in which Xaa is hydrophobic (preferably Leu), and Yaa (Ala or Ser) and Zaa (Gly or Ala) have small, neutral side chains.. It functions in the pathway protein modification; lipoprotein biosynthesis (signal peptide cleavage). This protein specifically catalyzes the removal of signal peptides from prolipoproteins. In Clostridioides difficile (strain 630) (Peptoclostridium difficile), this protein is Lipoprotein signal peptidase.